A 503-amino-acid chain; its full sequence is MSQLKLEEISSVIEEKIKNFELDCDMAEVGKVVSYADGVAKVYGLNGVMSYEVLEFETGDKGVAANLEEDSVGVIVFGFGNNIKEGTSVKRTKSLMKVPVGDAVVGRVLNALGEPIDGKGEIETNEFSLIEQKAPGIMDRKSVHEPLQTGIKAIDALVPIGRGQRELIIGDKQTGKTTVAIDAIINQKGQNVICIYVAIGQKESTVAQVVRKLEEYGAMEYSVVINASASDSAAMQYLAPYSGVAMGEYFRDHARHALIVYDDLSKHAVAYREISLILRRPPGREAFPGDVFYIHSRLLERAAKLCDEKGAGSLTALPIVETQAGDVSAYIPTNIISITDGQIFLETDLFYSGIRPAINVGLSVSRVGGAAQIKATKQVSGTLRLDLAQYRELQAFTQFASDLDEASKKQLERGQRMVEVLKQAPYSPLPIEKQVVIIYAGAKGFLDSVSVKKVVDFEEQLHPFLEAKYPQVLEEIHTKKALDKDLEAMLRKVLEEFKLTYSE.

Glycine 170–threonine 177 lines the ATP pocket.

Belongs to the ATPase alpha/beta chains family. In terms of assembly, F-type ATPases have 2 components, CF(1) - the catalytic core - and CF(0) - the membrane proton channel. CF(1) has five subunits: alpha(3), beta(3), gamma(1), delta(1), epsilon(1). CF(0) has three main subunits: a(1), b(2) and c(9-12). The alpha and beta chains form an alternating ring which encloses part of the gamma chain. CF(1) is attached to CF(0) by a central stalk formed by the gamma and epsilon chains, while a peripheral stalk is formed by the delta and b chains.

The protein localises to the cell inner membrane. It catalyses the reaction ATP + H2O + 4 H(+)(in) = ADP + phosphate + 5 H(+)(out). Functionally, produces ATP from ADP in the presence of a proton gradient across the membrane. The alpha chain is a regulatory subunit. The sequence is that of ATP synthase subunit alpha from Helicobacter pylori (strain G27).